Consider the following 272-residue polypeptide: sn-1 stearoyl-lipid 9-desaturase (272 aa).

Transmembrane regions (helical) follow at residues Ile-11–Ile-31 and Ala-39–Phe-59. Residues His-60 to His-65 carry the Histidine box-1 motif. Residues His-97–His-101 carry the Histidine box-2 motif. Residues Ile-160–Phe-180 traverse the membrane as a helical segment. The Histidine box-3 signature appears at His-230 to Gln-234.

Belongs to the fatty acid desaturase type 2 family. It depends on Fe(2+) as a cofactor.

Its subcellular location is the membrane. The enzyme catalyses a 1-octadecanoyl 2-acyl-glycerolipid + 2 reduced [2Fe-2S]-[ferredoxin] + O2 + 2 H(+) = a 1-[(9Z)-octadecenoyl]-2-acyl-glycerolipid + 2 oxidized [2Fe-2S]-[ferredoxin] + 2 H2O. Its pathway is lipid metabolism; polyunsaturated fatty acid biosynthesis. Its function is as follows. Desaturase involved in fatty acid biosynthesis. Introduces a double bond at carbon 9 of stearoyl groups (18:0) attached to the sn-1 position of the glycerol moiety of membrane glycerolipids. Does not desaturate palmitic acid (16:0), palmitoleic acid (16:1) and cis-vaccenic acid (18:1). The protein is sn-1 stearoyl-lipid 9-desaturase of Anabaena variabilis.